Reading from the N-terminus, the 313-residue chain is tRNA dimethylallyltransferase (313 aa).

13–20 (GPTASGKT) is a binding site for ATP. A substrate-binding site is contributed by 15–20 (TASGKT). 4 interaction with substrate tRNA regions span residues 38-41 (DSAL), 162-166 (QRLSR), 243-248 (RCVGYR), and 276-283 (KRQITWLR).

It belongs to the IPP transferase family. As to quaternary structure, monomer. Mg(2+) is required as a cofactor.

The enzyme catalyses adenosine(37) in tRNA + dimethylallyl diphosphate = N(6)-dimethylallyladenosine(37) in tRNA + diphosphate. Catalyzes the transfer of a dimethylallyl group onto the adenine at position 37 in tRNAs that read codons beginning with uridine, leading to the formation of N6-(dimethylallyl)adenosine (i(6)A). The polypeptide is tRNA dimethylallyltransferase (Aliivibrio salmonicida (strain LFI1238) (Vibrio salmonicida (strain LFI1238))).